A 107-amino-acid chain; its full sequence is MLATTTPTIEGKRITKYYGIVTGETIIGANLFRDFFASIRDIVGGRSGSYEEVLRQAKDTALREMQDQAALLGANAVVGVDLDYETVGDSGSMLMVTASGTAVRIED.

Belongs to the UPF0145 family.

This Phocaeicola vulgatus (strain ATCC 8482 / DSM 1447 / JCM 5826 / CCUG 4940 / NBRC 14291 / NCTC 11154) (Bacteroides vulgatus) protein is UPF0145 protein BVU_2335.